Consider the following 351-residue polypeptide: Molybdenum import ATP-binding protein ModC (351 aa).

An ABC transporter domain is found at M1 to T229. G31–S38 is an ATP binding site. The Mop domain maps to H290 to L351.

Belongs to the ABC transporter superfamily. Molybdate importer (TC 3.A.1.8) family. The complex is composed of two ATP-binding proteins (ModC), two transmembrane proteins (ModB) and a solute-binding protein (ModA).

The protein localises to the cell inner membrane. The enzyme catalyses molybdate(out) + ATP + H2O = molybdate(in) + ADP + phosphate + H(+). Its function is as follows. Part of the ABC transporter complex ModABC involved in molybdenum import. Responsible for energy coupling to the transport system. The polypeptide is Molybdenum import ATP-binding protein ModC (Haemophilus ducreyi (strain 35000HP / ATCC 700724)).